A 422-amino-acid polypeptide reads, in one-letter code: Glutamyl-tRNA reductase (422 aa).

Residues 49-52 (TCNR), Ser107, 112-114 (EPQ), and Gln118 each bind substrate. The active-site Nucleophile is Cys50. Residue 187-192 (GAGETI) participates in NADP(+) binding.

It belongs to the glutamyl-tRNA reductase family. In terms of assembly, homodimer.

It catalyses the reaction (S)-4-amino-5-oxopentanoate + tRNA(Glu) + NADP(+) = L-glutamyl-tRNA(Glu) + NADPH + H(+). The protein operates within porphyrin-containing compound metabolism; protoporphyrin-IX biosynthesis; 5-aminolevulinate from L-glutamyl-tRNA(Glu): step 1/2. Functionally, catalyzes the NADPH-dependent reduction of glutamyl-tRNA(Glu) to glutamate 1-semialdehyde (GSA). The polypeptide is Glutamyl-tRNA reductase (Pseudomonas paraeruginosa (strain DSM 24068 / PA7) (Pseudomonas aeruginosa (strain PA7))).